We begin with the raw amino-acid sequence, 291 residues long: Formamidopyrimidine-DNA glycosylase (291 aa).

The active-site Schiff-base intermediate with DNA is Pro2. Glu3 serves as the catalytic Proton donor. Residue Lys58 is the Proton donor; for beta-elimination activity of the active site. His104, Arg123, and Lys166 together coordinate DNA. The FPG-type zinc finger occupies 257 to 291 (KVYDREGKPCPTCGGTVQRFVQNGRSTFWCPKCQK). Catalysis depends on Arg281, which acts as the Proton donor; for delta-elimination activity.

Belongs to the FPG family. Monomer. Zn(2+) serves as cofactor.

The enzyme catalyses Hydrolysis of DNA containing ring-opened 7-methylguanine residues, releasing 2,6-diamino-4-hydroxy-5-(N-methyl)formamidopyrimidine.. It catalyses the reaction 2'-deoxyribonucleotide-(2'-deoxyribose 5'-phosphate)-2'-deoxyribonucleotide-DNA = a 3'-end 2'-deoxyribonucleotide-(2,3-dehydro-2,3-deoxyribose 5'-phosphate)-DNA + a 5'-end 5'-phospho-2'-deoxyribonucleoside-DNA + H(+). Functionally, involved in base excision repair of DNA damaged by oxidation or by mutagenic agents. Acts as a DNA glycosylase that recognizes and removes damaged bases. Has a preference for oxidized purines, such as 7,8-dihydro-8-oxoguanine (8-oxoG). Has AP (apurinic/apyrimidinic) lyase activity and introduces nicks in the DNA strand. Cleaves the DNA backbone by beta-delta elimination to generate a single-strand break at the site of the removed base with both 3'- and 5'-phosphates. This Rhodopseudomonas palustris (strain TIE-1) protein is Formamidopyrimidine-DNA glycosylase.